A 369-amino-acid polypeptide reads, in one-letter code: MPNLEKEFHNGVNGLNGNTKIENDGCVNPHSLGIIGGGWYGCHIAATLLALGFRVKLFEQHERLLHEASGNNQFRLHMGFHYARHSGTRLQSRDGFLRFVEHYPELSRIVPYNIYAVPTQDSLLDYNTYKAIMASSGVAFTEGAPDGVHITNVDGIMCVPERVLLLTKARAYFEAALKGALELGRKVSSIQEADDGVLIDGEGFDFVVDATWGHYMDLDLQVIYEATLLLYYEGPPEFPAVTLVDGPLASVYPTEVPGVFTLSSVPHTPLGQFKTAAEARAARDGVSPATISAKRALMEEQIMHYLPTFLETFRYIGPQLAVKTKPLGAYDDRSCRVSRRGRMFSVMSGKIDTIFFAHERILSLIDDES.

This sequence belongs to the aromatic-ring hydroxylase family. FAD serves as cofactor.

Its pathway is secondary metabolite biosynthesis. FAD-dependent monooxygenase; part of the gene cluster that mediates the biosynthesis of the gamma-pyrones fusapyrone (FPY) and deoxyfusapyrone (dFPY). FPY is an undecaketide and thus likely synthesized by the polyketide synthase FPY1 from acetyl-CoA functioning as starter unit and the addition of 10 malonyl-CoA extender units by successive Claisen-condensations. Next to this, FPY shares some rare features: C-glycosylated 4-deoxyglucose at C-3, a gem-dimethyl group at C-13, and an alpha-beta to beta-gamma double bond shift at C-20. During FPY biosynthesis mono-C-methyl groups are transferred to the tetra-, penta-, hexa- and heptaketide, while two C-methyl groups are transferred to the nonaketide, suggesting that the CMet domain is programmed to selectively catalyze two successive C-alpha-methylation reactions of the nonaketide, while other alpha-carbons are non- or mono-methylated only. While the origin of the 4'-deoxyglucose moiety remains opaque, its transfer to C-3 is most likely mediated by the C-glycosyltransferase FPY2. Next to this, the hydroxyl group present at C-33 and discriminating between FPY and dFPY, is likely to be installed by the cytochrome P450 monooxygenase FPY7. No putative function can be predicted for the remaining genes FPY3-FPY6. In Fusarium mangiferae (Mango malformation disease fungus), this protein is FAD-dependent monooxygenase FPY4.